A 221-amino-acid polypeptide reads, in one-letter code: MLDTKPSATRRIPLVIATVAVGGLAGFAALYGLGLSRAPTGDPACRAAVATAQKIAPLAHGEVAALTMASAPLKLPDLAFEDADGKPKKLSDFRGKTLLVNLWATWCVPCRKEMPALDELQGKLSGPNFEVVAINIDTRDPEKPKTFLKEANLTRLGYFNDQKAKVFQDLKAIGRALGMPTSVLVDPQGCEIATIAGPAEWASEDALKLIRAATGKAAAAL.

Residues 1–11 (MLDTKPSATRR) are Cytoplasmic-facing. A helical transmembrane segment spans residues 12-35 (IPLVIATVAVGGLAGFAALYGLGL). The Periplasmic portion of the chain corresponds to 36-221 (SRAPTGDPAC…AATGKAAAAL (186 aa)). Disulfide bonds link Cys-45-Cys-190 and Cys-107-Cys-110. The region spanning 69-215 (ASAPLKLPDL…ALKLIRAATG (147 aa)) is the Thioredoxin domain.

Belongs to the thioredoxin family. Monomer.

The protein resides in the cell membrane. Involved in cytochrome aa3 assembly. This Bradyrhizobium diazoefficiens (strain JCM 10833 / BCRC 13528 / IAM 13628 / NBRC 14792 / USDA 110) protein is Thiol:disulfide interchange protein TlpA (tlpA).